A 434-amino-acid polypeptide reads, in one-letter code: 3-phosphoshikimate 1-carboxyvinyltransferase (434 aa).

Residues K15, S16, and R20 each contribute to the 3-phosphoshikimate site. Residue K15 coordinates phosphoenolpyruvate. Phosphoenolpyruvate-binding residues include G96 and R124. 5 residues coordinate 3-phosphoshikimate: S169, Q171, S195, D319, and K346. Q171 provides a ligand contact to phosphoenolpyruvate. Residue D319 is the Proton acceptor of the active site. 2 residues coordinate phosphoenolpyruvate: R350 and R394.

This sequence belongs to the EPSP synthase family. In terms of assembly, monomer.

It is found in the cytoplasm. It catalyses the reaction 3-phosphoshikimate + phosphoenolpyruvate = 5-O-(1-carboxyvinyl)-3-phosphoshikimate + phosphate. The protein operates within metabolic intermediate biosynthesis; chorismate biosynthesis; chorismate from D-erythrose 4-phosphate and phosphoenolpyruvate: step 6/7. Catalyzes the transfer of the enolpyruvyl moiety of phosphoenolpyruvate (PEP) to the 5-hydroxyl of shikimate-3-phosphate (S3P) to produce enolpyruvyl shikimate-3-phosphate and inorganic phosphate. The sequence is that of 3-phosphoshikimate 1-carboxyvinyltransferase from Chlorobaculum parvum (strain DSM 263 / NCIMB 8327) (Chlorobium vibrioforme subsp. thiosulfatophilum).